Consider the following 222-residue polypeptide: Riboflavin kinase (222 aa).

Residues 1 to 92 (MVEAEDLQSL…VRIFNPDQRG (92 aa)) are unknown. Residues 93–222 (YTLTGTVISG…DTIEVEITHD (130 aa)) form a riboflavin kinase region. 102–107 (GLGEGR) serves as a coordination point for CDP. Thr131 and Asn133 together coordinate Mg(2+). Residues Thr188 and Glu196 each coordinate FMN. 201–204 (CELR) is a CDP binding site.

This sequence belongs to the archaeal riboflavin kinase family. Mg(2+) is required as a cofactor.

It catalyses the reaction riboflavin + CTP = CDP + FMN + H(+). The protein operates within cofactor biosynthesis; FMN biosynthesis; FMN from riboflavin (CTP route): step 1/1. Functionally, catalyzes the CTP-dependent phosphorylation of riboflavin (vitamin B2) to form flavin mononucleotide (FMN). In Methanoculleus marisnigri (strain ATCC 35101 / DSM 1498 / JR1), this protein is Riboflavin kinase (ribK).